The sequence spans 207 residues: Small ribosomal subunit protein uS4c (207 aa).

Residues 92–150 (MRLDNILFRLGFVPTIPSARQLINHRHILVNNRIVDVPSFHCKPKDIITIGSPKTYQSI) enclose the S4 RNA-binding domain.

The protein belongs to the universal ribosomal protein uS4 family. In terms of assembly, part of the 30S ribosomal subunit. Contacts protein S5. The interaction surface between S4 and S5 is involved in control of translational fidelity.

The protein localises to the plastid. Its subcellular location is the chloroplast. One of the primary rRNA binding proteins, it binds directly to 16S rRNA where it nucleates assembly of the body of the 30S subunit. Functionally, with S5 and S12 plays an important role in translational accuracy. The sequence is that of Small ribosomal subunit protein uS4c (rps4) from Equisetum variegatum (Variegated horsetail).